Here is a 308-residue protein sequence, read N- to C-terminus: D-alanine--D-alanine ligase (308 aa).

In terms of domain architecture, ATP-grasp spans 104-304; that stretch reads KQALVPHGIP…YAELVERIVE (201 aa). Residue 131 to 187 coordinates ATP; that stretch reads LPRPYVLKPVNEGSSVGVAIVRDDSNYGNPISRDALGPWQQFDRLLAEPFIKGRELT. Mg(2+)-binding residues include aspartate 255, glutamate 271, and asparagine 273.

Belongs to the D-alanine--D-alanine ligase family. Requires Mg(2+) as cofactor. It depends on Mn(2+) as a cofactor.

It localises to the cytoplasm. The catalysed reaction is 2 D-alanine + ATP = D-alanyl-D-alanine + ADP + phosphate + H(+). Its pathway is cell wall biogenesis; peptidoglycan biosynthesis. Cell wall formation. The chain is D-alanine--D-alanine ligase from Sphingopyxis alaskensis (strain DSM 13593 / LMG 18877 / RB2256) (Sphingomonas alaskensis).